A 360-amino-acid polypeptide reads, in one-letter code: Sphingolipid delta(4)-desaturase (360 aa).

Transmembrane regions (helical) follow at residues 67–87, 89–109, and 125–145; these read AVVLLQLSIAYALKNTPVLSF, FLALAYVVGATANQNCFLCIH, and LFAIWVNLPIGVPYSASFQPY. Positions 109 to 113 match the Histidine box-1 motif; the sequence is HELSH. Residues 146–150 carry the Histidine box-2 motif; sequence HQLHH. 3 helical membrane-spanning segments follow: residues 170-190, 202-222, and 228-248; these read VLSSLLGKAFFATFQIFFYAL, FIHLLNVLVCLVSDFILIKFG, and WYLILSSFFAGSLHPTAGHFI. The Histidine box-3 signature appears at 288–292; sequence HNEHH.

This sequence belongs to the fatty acid desaturase type 1 family. DEGS subfamily.

The protein localises to the membrane. The enzyme catalyses an N-acylsphinganine + 2 Fe(II)-[cytochrome b5] + O2 + 2 H(+) = an N-acylsphing-4-enine + 2 Fe(III)-[cytochrome b5] + 2 H2O. The protein operates within lipid metabolism; sphingolipid metabolism. Its function is as follows. Delta(4)-fatty-acid desaturase which introduces a double bond at the 4-position in the long-chain base (LCB) of ceramides. Required for the formation of the monounsaturated sphingoid base (E)-sphing-4-enine during glucosylceramide (GluCer) biosynthesis. This is Sphingolipid delta(4)-desaturase from Komagataella phaffii (strain GS115 / ATCC 20864) (Yeast).